We begin with the raw amino-acid sequence, 207 residues long: Casparian strip membrane protein 3 (207 aa).

Residues 1 to 45 (MDSTKSTEETAINIPRESSSTKHKIAVAAVKAVATPHKRGGMKRG) are Cytoplasmic-facing. The chain crosses the membrane as a helical span at residues 46 to 66 (VAIFDFILRICALAAALAATA). Residues 67–95 (TMGTTDQTLPFFTQFFQFQASYDDLPTFT) lie on the Extracellular side of the membrane. Residues 96 to 116 (FFVIANAIASGYLVLSLPFSI) form a helical membrane-spanning segment. At 117–128 (VAIVRPHVTGVK) the chain is on the cytoplasmic side. The helical transmembrane segment at 129–149 (LLLLILDTVLVAFTTAAAASA) threads the bilayer. Residues 150–181 (AAIVYLAHNGNSNTNWFAICQQFNDFCQRTSG) are Extracellular-facing. Residues 182–202 (AVVASFIAAAIFIFLVVLSAV) traverse the membrane as a helical segment. Residues 203–207 (ALRRH) lie on the Cytoplasmic side of the membrane.

Belongs to the Casparian strip membrane proteins (CASP) family. In terms of assembly, homodimer and heterodimers.

It localises to the cell membrane. Regulates membrane-cell wall junctions and localized cell wall deposition. Required for establishment of the Casparian strip membrane domain (CSD) and the subsequent formation of Casparian strips, a cell wall modification of the root endodermis that determines an apoplastic barrier between the intraorganismal apoplasm and the extraorganismal apoplasm and prevents lateral diffusion. The chain is Casparian strip membrane protein 3 from Erythranthe guttata (Yellow monkey flower).